The chain runs to 291 residues: Protease HtpX (291 aa).

2 consecutive transmembrane segments (helical) span residues 4–24 and 37–57; these read IVIF…LLTC and IISG…SKFI. H139 is a Zn(2+) binding site. Residue E140 is part of the active site. H143 contributes to the Zn(2+) binding site. 2 consecutive transmembrane segments (helical) span residues 147–167 and 195–215; these read GDMV…IFIS and IVST…VLWF. E220 contributes to the Zn(2+) binding site.

This sequence belongs to the peptidase M48B family. Zn(2+) is required as a cofactor.

The protein localises to the cell membrane. The chain is Protease HtpX from Baumannia cicadellinicola subsp. Homalodisca coagulata.